A 390-amino-acid chain; its full sequence is MLPDLTDIGTDPASTRVVVAMSGGVDSSVVAGLLARAGFDVVGVTLQLYDQGEAARRKGACCAGQDIYDARDVADRLGIPHYVLDYESRFREEVIERFADSYAAGFTPIPCVDCNRTVKFRDLLATAEDLGASVLATGHYVASRALPDGRRGLFRAAEENRDQSYFLYATTQAQATKLRFPLGGMRKSDVRALAAELGLPVADKPDSQDICFVPGGDYAEVVERLRPEAGEAGDIVHLDGRVLGRHRGVMHYTIGQRKGLGISTPEPLYVVAIDAARREVRVGPREALAVRSIGLTDINWLGDVPLLDACAAEQDIYVKVRSTRPPTPARLLRDADGAPTVELLAGEEGVAPGQACVFYDAASGAARLLGGGTIVRAERAGRHLAAAQVA.

ATP is bound by residues 20-27 (AMSGGVDS) and Leu46. The active-site Nucleophile is Cys114. A disulfide bond links Cys114 and Cys211. Gly138 serves as a coordination point for ATP. The segment at 161-163 (RDQ) is interaction with tRNA. The Cysteine persulfide intermediate role is filled by Cys211.

It belongs to the MnmA/TRMU family.

It localises to the cytoplasm. It catalyses the reaction S-sulfanyl-L-cysteinyl-[protein] + uridine(34) in tRNA + AH2 + ATP = 2-thiouridine(34) in tRNA + L-cysteinyl-[protein] + A + AMP + diphosphate + H(+). Functionally, catalyzes the 2-thiolation of uridine at the wobble position (U34) of tRNA, leading to the formation of s(2)U34. This chain is tRNA-specific 2-thiouridylase MnmA, found in Azorhizobium caulinodans (strain ATCC 43989 / DSM 5975 / JCM 20966 / LMG 6465 / NBRC 14845 / NCIMB 13405 / ORS 571).